Reading from the N-terminus, the 104-residue chain is Large ribosomal subunit protein uL24 (104 aa).

Belongs to the universal ribosomal protein uL24 family. As to quaternary structure, part of the 50S ribosomal subunit.

One of two assembly initiator proteins, it binds directly to the 5'-end of the 23S rRNA, where it nucleates assembly of the 50S subunit. Functionally, one of the proteins that surrounds the polypeptide exit tunnel on the outside of the subunit. This is Large ribosomal subunit protein uL24 from Flavobacterium johnsoniae (strain ATCC 17061 / DSM 2064 / JCM 8514 / BCRC 14874 / CCUG 350202 / NBRC 14942 / NCIMB 11054 / UW101) (Cytophaga johnsonae).